A 207-amino-acid chain; its full sequence is N-(5'-phosphoribosyl)anthranilate isomerase (207 aa).

It belongs to the TrpF family.

It carries out the reaction N-(5-phospho-beta-D-ribosyl)anthranilate = 1-(2-carboxyphenylamino)-1-deoxy-D-ribulose 5-phosphate. It participates in amino-acid biosynthesis; L-tryptophan biosynthesis; L-tryptophan from chorismate: step 3/5. The sequence is that of N-(5'-phosphoribosyl)anthranilate isomerase from Legionella pneumophila (strain Lens).